A 98-amino-acid chain; its full sequence is Nucleoid-associated protein pc0477 (98 aa).

It belongs to the YbaB/EbfC family. Homodimer.

It is found in the cytoplasm. The protein localises to the nucleoid. Its function is as follows. Binds to DNA and alters its conformation. May be involved in regulation of gene expression, nucleoid organization and DNA protection. The chain is Nucleoid-associated protein pc0477 from Protochlamydia amoebophila (strain UWE25).